Consider the following 178-residue polypeptide: Small ribosomal subunit protein uS4 (178 aa).

Residues 104 to 166 enclose the S4 RNA-binding domain; that stretch reads RRLQTIVFRK…SNSPMASENH (63 aa). A disordered region spans residues 158 to 178; the sequence is NSPMASENHPERTAATSEENQ.

It belongs to the universal ribosomal protein uS4 family. Part of the 30S ribosomal subunit. Contacts protein S5. The interaction surface between S4 and S5 is involved in control of translational fidelity.

Its function is as follows. One of the primary rRNA binding proteins, it binds directly to 16S rRNA where it nucleates assembly of the body of the 30S subunit. With S5 and S12 plays an important role in translational accuracy. The polypeptide is Small ribosomal subunit protein uS4 (Methanococcus maripaludis (strain DSM 14266 / JCM 13030 / NBRC 101832 / S2 / LL)).